The chain runs to 434 residues: Trigger factor (434 aa).

Positions 160–245 (GDKVKMNFVG…LTEVQAANLP (86 aa)) constitute a PPIase FKBP-type domain.

Belongs to the FKBP-type PPIase family. Tig subfamily.

It localises to the cytoplasm. It carries out the reaction [protein]-peptidylproline (omega=180) = [protein]-peptidylproline (omega=0). Functionally, involved in protein export. Acts as a chaperone by maintaining the newly synthesized protein in an open conformation. Functions as a peptidyl-prolyl cis-trans isomerase. The chain is Trigger factor from Shewanella baltica (strain OS185).